The following is a 394-amino-acid chain: Na(+)/H(+) antiporter NhaA (394 aa).

A run of 11 helical transmembrane segments spans residues 14 to 34, 59 to 79, 95 to 115, 125 to 145, 154 to 174, 179 to 199, 213 to 233, 254 to 274, 292 to 312, 328 to 348, and 363 to 383; these read AGGL…NSAL, LLLW…GLEV, VFPA…YLLF, GWAI…ALLG, VFLL…IALF, VSLQ…YMNW, LVLW…GVIV, GLHP…NAGV, IATG…WLAV, IFAV…IASL, and LGIL…LRLV.

Belongs to the NhaA Na(+)/H(+) (TC 2.A.33) antiporter family.

The protein resides in the cell inner membrane. It catalyses the reaction Na(+)(in) + 2 H(+)(out) = Na(+)(out) + 2 H(+)(in). Its function is as follows. Na(+)/H(+) antiporter that extrudes sodium in exchange for external protons. The polypeptide is Na(+)/H(+) antiporter NhaA (Yersinia pseudotuberculosis serotype O:1b (strain IP 31758)).